The primary structure comprises 188 residues: Translation initiation factor IF-3 (188 aa).

The protein belongs to the IF-3 family. In terms of assembly, monomer.

It is found in the cytoplasm. Functionally, IF-3 binds to the 30S ribosomal subunit and shifts the equilibrium between 70S ribosomes and their 50S and 30S subunits in favor of the free subunits, thus enhancing the availability of 30S subunits on which protein synthesis initiation begins. This chain is Translation initiation factor IF-3, found in Fusobacterium nucleatum subsp. nucleatum (strain ATCC 25586 / DSM 15643 / BCRC 10681 / CIP 101130 / JCM 8532 / KCTC 2640 / LMG 13131 / VPI 4355).